The following is an 88-amino-acid chain: uncharacterized protein (88 aa).

Positions 1 to 24 (MLPRSCKDFYETLRTAVLCGQACA) are cleaved as a signal peptide.

To Rhizobium NGR234A y4oL.

This is an uncharacterized protein from Sinorhizobium fredii (strain NBRC 101917 / NGR234).